The chain runs to 315 residues: MNQLDALKQVTTVVADTGDFRQLGAYRPQDATTNPSLILKAVQKADYAPLLQESVERWRGRALDEIMDRLIVRFGCEILSLIPGRVSTEVDARLSFDTMATVTRGERIIDLYRAEGVDTARVLIKIAATWEGIEAARILEERGIHTNLTLLFSPVQAVACGAARVQLISPFVGRIYDWYKKQAGAQWDEAAMAGANDPGVQSVRQIYQYYKHFGIRTEVMGASFRNIGQITALAGCDLLTIAPELLAQLAASEAPLERALDPASAKDLELQPVQYDEPGFRYALNADAMATEKLAEGIRAFAADAAKLEQMVLAA.

Residue K125 is the Schiff-base intermediate with substrate of the active site.

Belongs to the transaldolase family. Type 1 subfamily. As to quaternary structure, homodimer.

The protein resides in the cytoplasm. The catalysed reaction is D-sedoheptulose 7-phosphate + D-glyceraldehyde 3-phosphate = D-erythrose 4-phosphate + beta-D-fructose 6-phosphate. The protein operates within carbohydrate degradation; pentose phosphate pathway; D-glyceraldehyde 3-phosphate and beta-D-fructose 6-phosphate from D-ribose 5-phosphate and D-xylulose 5-phosphate (non-oxidative stage): step 2/3. Its function is as follows. Transaldolase is important for the balance of metabolites in the pentose-phosphate pathway. The polypeptide is Transaldolase (Paracidovorax citrulli (strain AAC00-1) (Acidovorax citrulli)).